The following is a 95-amino-acid chain: Pyrimidine/purine nucleoside phosphorylase (95 aa).

This sequence belongs to the nucleoside phosphorylase PpnP family.

It carries out the reaction a purine D-ribonucleoside + phosphate = a purine nucleobase + alpha-D-ribose 1-phosphate. It catalyses the reaction adenosine + phosphate = alpha-D-ribose 1-phosphate + adenine. The catalysed reaction is cytidine + phosphate = cytosine + alpha-D-ribose 1-phosphate. The enzyme catalyses guanosine + phosphate = alpha-D-ribose 1-phosphate + guanine. It carries out the reaction inosine + phosphate = alpha-D-ribose 1-phosphate + hypoxanthine. It catalyses the reaction thymidine + phosphate = 2-deoxy-alpha-D-ribose 1-phosphate + thymine. The catalysed reaction is uridine + phosphate = alpha-D-ribose 1-phosphate + uracil. The enzyme catalyses xanthosine + phosphate = alpha-D-ribose 1-phosphate + xanthine. In terms of biological role, catalyzes the phosphorolysis of diverse nucleosides, yielding D-ribose 1-phosphate and the respective free bases. Can use uridine, adenosine, guanosine, cytidine, thymidine, inosine and xanthosine as substrates. Also catalyzes the reverse reactions. In Enterobacter sp. (strain 638), this protein is Pyrimidine/purine nucleoside phosphorylase.